The chain runs to 380 residues: Lipid-A-disaccharide synthase (380 aa).

Belongs to the LpxB family.

It catalyses the reaction a lipid X + a UDP-2-N,3-O-bis[(3R)-3-hydroxyacyl]-alpha-D-glucosamine = a lipid A disaccharide + UDP + H(+). The protein operates within bacterial outer membrane biogenesis; LPS lipid A biosynthesis. Functionally, condensation of UDP-2,3-diacylglucosamine and 2,3-diacylglucosamine-1-phosphate to form lipid A disaccharide, a precursor of lipid A, a phosphorylated glycolipid that anchors the lipopolysaccharide to the outer membrane of the cell. The chain is Lipid-A-disaccharide synthase from Pseudomonas syringae pv. syringae (strain B728a).